The sequence spans 182 residues: Adenine phosphoribosyltransferase (182 aa).

Belongs to the purine/pyrimidine phosphoribosyltransferase family. Homodimer.

It localises to the cytoplasm. It carries out the reaction AMP + diphosphate = 5-phospho-alpha-D-ribose 1-diphosphate + adenine. It participates in purine metabolism; AMP biosynthesis via salvage pathway; AMP from adenine: step 1/1. Catalyzes a salvage reaction resulting in the formation of AMP, that is energically less costly than de novo synthesis. In Pseudomonas syringae pv. tomato (strain ATCC BAA-871 / DC3000), this protein is Adenine phosphoribosyltransferase.